A 153-amino-acid chain; its full sequence is MSENKQALQVAALKNGTVIDHIPSEKLFTVVSLLGLEHMTTNITIGFNLDSKKLGKKGIIKIADKFFCDEEINRISVVAPHVKLNIIRDYEVVEKKEVRMPDELKAIVKCANPKCITNNEPMATLFHVIDKDNCVIKCHYCEKEQKREDITII.

Zn(2+)-binding residues include C110, C115, C138, and C141.

It belongs to the PyrI family. Contains catalytic and regulatory chains. Zn(2+) serves as cofactor.

Its function is as follows. Involved in allosteric regulation of aspartate carbamoyltransferase. The polypeptide is Aspartate carbamoyltransferase regulatory chain (Bacteroides fragilis (strain ATCC 25285 / DSM 2151 / CCUG 4856 / JCM 11019 / LMG 10263 / NCTC 9343 / Onslow / VPI 2553 / EN-2)).